The primary structure comprises 300 residues: Ribosomal protein L11 methyltransferase (300 aa).

The S-adenosyl-L-methionine site is built by T152, G173, D195, and N234.

Belongs to the methyltransferase superfamily. PrmA family.

The protein localises to the cytoplasm. It carries out the reaction L-lysyl-[protein] + 3 S-adenosyl-L-methionine = N(6),N(6),N(6)-trimethyl-L-lysyl-[protein] + 3 S-adenosyl-L-homocysteine + 3 H(+). Methylates ribosomal protein L11. This Burkholderia ambifaria (strain ATCC BAA-244 / DSM 16087 / CCUG 44356 / LMG 19182 / AMMD) (Burkholderia cepacia (strain AMMD)) protein is Ribosomal protein L11 methyltransferase.